The following is a 143-amino-acid chain: Antitumor antibiotic C-1027 apoprotein (143 aa).

The N-terminal stretch at 1 to 33 is a signal peptide; that stretch reads MSLRHMSRRASRFGVVAVASIGLAAAAQSVAFA. 2 cysteine pairs are disulfide-bonded: cysteine 69–cysteine 78 and cysteine 119–cysteine 124.

Belongs to the neocarzinostatin family.

Functionally, binds non-covalently to a chromophore which is the cytotoxic and mutagenic component of the antibiotic. The chromophore binds to DNA as a weak intercalator and causes single- and double-strand breaks. The chain is Antitumor antibiotic C-1027 apoprotein (cagA) from Streptomyces globisporus.